The primary structure comprises 29 residues: Neurotoxin BmK A3-6 (29 aa).

Post-translationally, contains 3 disulfide bonds. As to expression, expressed by the venom gland.

The protein resides in the secreted. The sequence is that of Neurotoxin BmK A3-6 from Olivierus martensii (Manchurian scorpion).